The primary structure comprises 407 residues: Carbamoyl phosphate synthase small chain (407 aa).

Positions 1-205 (MTETTPKTAP…LQDGYGEQDA (205 aa)) are CPSase. Serine 60, glycine 257, and glycine 259 together coordinate L-glutamine. Positions 209–397 (HVVALDFGVK…INLIRERKGQ (189 aa)) constitute a Glutamine amidotransferase type-1 domain. The Nucleophile role is filled by cysteine 286. 5 residues coordinate L-glutamine: leucine 287, glutamine 290, asparagine 328, glycine 330, and phenylalanine 331. Residues histidine 370 and glutamate 372 contribute to the active site.

The protein belongs to the CarA family. As to quaternary structure, composed of two chains; the small (or glutamine) chain promotes the hydrolysis of glutamine to ammonia, which is used by the large (or ammonia) chain to synthesize carbamoyl phosphate. Tetramer of heterodimers (alpha,beta)4.

The catalysed reaction is hydrogencarbonate + L-glutamine + 2 ATP + H2O = carbamoyl phosphate + L-glutamate + 2 ADP + phosphate + 2 H(+). The enzyme catalyses L-glutamine + H2O = L-glutamate + NH4(+). It participates in amino-acid biosynthesis; L-arginine biosynthesis; carbamoyl phosphate from bicarbonate: step 1/1. The protein operates within pyrimidine metabolism; UMP biosynthesis via de novo pathway; (S)-dihydroorotate from bicarbonate: step 1/3. In terms of biological role, small subunit of the glutamine-dependent carbamoyl phosphate synthetase (CPSase). CPSase catalyzes the formation of carbamoyl phosphate from the ammonia moiety of glutamine, carbonate, and phosphate donated by ATP, constituting the first step of 2 biosynthetic pathways, one leading to arginine and/or urea and the other to pyrimidine nucleotides. The small subunit (glutamine amidotransferase) binds and cleaves glutamine to supply the large subunit with the substrate ammonia. The sequence is that of Carbamoyl phosphate synthase small chain from Brucella canis (strain ATCC 23365 / NCTC 10854 / RM-666).